Consider the following 247-residue polypeptide: 2,3-bisphosphoglycerate-dependent phosphoglycerate mutase (247 aa).

Substrate-binding positions include 8-15 (RHGESTWN), 21-22 (TG), R60, 87-90 (ERHY), K98, 114-115 (RR), and 183-184 (GN). The active-site Tele-phosphohistidine intermediate is the H9. E87 serves as the catalytic Proton donor/acceptor.

The protein belongs to the phosphoglycerate mutase family. BPG-dependent PGAM subfamily. Homodimer.

It carries out the reaction (2R)-2-phosphoglycerate = (2R)-3-phosphoglycerate. Its pathway is carbohydrate degradation; glycolysis; pyruvate from D-glyceraldehyde 3-phosphate: step 3/5. Catalyzes the interconversion of 2-phosphoglycerate and 3-phosphoglycerate. This chain is 2,3-bisphosphoglycerate-dependent phosphoglycerate mutase, found in Albidiferax ferrireducens (strain ATCC BAA-621 / DSM 15236 / T118) (Rhodoferax ferrireducens).